A 967-amino-acid polypeptide reads, in one-letter code: MRRIETMKGLFFCLGMVVFMLLGSVSPMNNEGKALMAIKASFSNVANMLLDWDDVHNHDFCSWRGVFCDNVSLNVVSLNLSNLNLGGEISSALGDLMNLQSIDLQGNKLGGQIPDEIGNCVSLAYVDFSTNLLFGDIPFSISKLKQLEFLNLKNNQLTGPIPATLTQIPNLKTLDLARNQLTGEIPRLLYWNEVLQYLGLRGNMLTGTLSPDMCQLTGLWYFDVRGNNLTGTIPESIGNCTSFEILDVSYNQITGVIPYNIGFLQVATLSLQGNKLTGRIPEVIGLMQALAVLDLSDNELTGPIPPILGNLSFTGKLYLHGNKLTGQIPPELGNMSRLSYLQLNDNELVGKIPPELGKLEQLFELNLANNNLVGLIPSNISSCAALNQFNVHGNFLSGAVPLEFRNLGSLTYLNLSSNSFKGKIPAELGHIINLDTLDLSGNNFSGSIPLTLGDLEHLLILNLSRNHLNGTLPAEFGNLRSIQIIDVSFNFLAGVIPTELGQLQNINSLILNNNKIHGKIPDQLTNCFSLANLNISFNNLSGIIPPMKNFTRFSPASFFGNPFLCGNWVGSICGPSLPKSQVFTRVAVICMVLGFITLICMIFIAVYKSKQQKPVLKGSSKQPEGSTKLVILHMDMAIHTFDDIMRVTENLDEKYIIGYGASSTVYKCTSKTSRPIAIKRIYNQYPSNFREFETELETIGSIRHRNIVSLHGYALSPFGNLLFYDYMENGSLWDLLHGPGKKVKLDWETRLKIAVGAAQGLAYLHHDCTPRIIHRDIKSSNILLDGNFEARLSDFGIAKSIPATKTYASTYVLGTIGYIDPEYARTSRLNEKSDIYSFGIVLLELLTGKKAVDNEANLHQMILSKADDNTVMEAVDAEVSVTCMDSGHIKKTFQLALLCTKRNPLERPTMQEVSRVLLSLVPSPPPKKLPSPAKVQEGEERRESHSSDTTTPQWFVQFREDISKSSL.

Positions 1-27 (MRRIETMKGLFFCLGMVVFMLLGSVSP) are cleaved as a signal peptide. Over 28 to 585 (MNNEGKALMA…SLPKSQVFTR (558 aa)) the chain is Extracellular. Asparagine 70 and asparagine 79 each carry an N-linked (GlcNAc...) asparagine glycan. 20 LRR repeats span residues 74 to 97 (NVVS…GDLM), 98 to 120 (NLQS…IGNC), 122 to 145 (SLAY…SKLK), 146 to 166 (QLEF…ATLT), 170 to 192 (NLKT…LYWN), 194 to 216 (VLQY…MCQL), 218 to 240 (GLWY…IGNC), 242 to 261 (SFEI…PYNI), 265 to 287 (QVAT…IGLM), 289 to 311 (ALAV…LGNL), 313 to 335 (FTGK…LGNM), 337 to 359 (RLSY…LGKL), 361 to 382 (QLFE…NISS), 385 to 406 (ALNQ…EFRN), 409 to 431 (SLTY…LGHI), 433 to 456 (NLDT…GDLE), 457 to 479 (HLLI…FGNL), 481 to 503 (SIQI…LGQL), 505 to 527 (NINS…LTNC), and 529 to 550 (SLAN…MKNF). Residues asparagine 228 and asparagine 239 are each glycosylated (N-linked (GlcNAc...) asparagine). N-linked (GlcNAc...) asparagine glycosylation is found at asparagine 310 and asparagine 334. Asparagine 379 carries an N-linked (GlcNAc...) asparagine glycan. N-linked (GlcNAc...) asparagine glycosylation is found at asparagine 414, asparagine 443, asparagine 462, and asparagine 469. 3 N-linked (GlcNAc...) asparagine glycosylation sites follow: asparagine 534, asparagine 539, and asparagine 549. Residues 586 to 606 (VAVICMVLGFITLICMIFIAV) form a helical membrane-spanning segment. Topologically, residues 607–967 (YKSKQQKPVL…FREDISKSSL (361 aa)) are cytoplasmic. Threonine 640 and threonine 648 each carry phosphothreonine. The region spanning 651-921 (LDEKYIIGYG…EVSRVLLSLV (271 aa)) is the Protein kinase domain. ATP-binding positions include 657–665 (IGYGASSTV) and lysine 679. Tyrosine 724 and tyrosine 763 each carry phosphotyrosine. Aspartate 776 functions as the Proton acceptor in the catalytic mechanism. Tyrosine 818 carries the phosphotyrosine modification. Threonine 826 carries the phosphothreonine modification. The disordered stretch occupies residues 921-955 (VPSPPPKKLPSPAKVQEGEERRESHSSDTTTPQWF). The span at 936–946 (QEGEERRESHS) shows a compositional bias: basic and acidic residues.

It belongs to the protein kinase superfamily. Ser/Thr protein kinase family. In terms of tissue distribution, mostly expressed in developing organs, including bud clusters, flowers, siliques and young rosettes. Also detected in mature aboveground organs, such as leaves, stems and pedicels, but barely in roots.

It localises to the membrane. The catalysed reaction is L-seryl-[protein] + ATP = O-phospho-L-seryl-[protein] + ADP + H(+). It catalyses the reaction L-threonyl-[protein] + ATP = O-phospho-L-threonyl-[protein] + ADP + H(+). Its function is as follows. Receptor kinase that regulates inflorescence architecture and organ shape as well as stomatal patterning, including density and clustering, together with ERL1 and ER. In Arabidopsis thaliana (Mouse-ear cress), this protein is LRR receptor-like serine/threonine-protein kinase ERL2 (ERL2).